A 351-amino-acid chain; its full sequence is Protein-glutamate methylesterase/protein-glutamine glutaminase (351 aa).

Positions 6 to 123 constitute a Response regulatory domain; that stretch reads RVLVVDDSPT…ARPFGDLADK (118 aa). Asp57 is subject to 4-aspartylphosphate. In terms of domain architecture, CheB-type methylesterase spans 154-346; that stretch reads YRAGRKVVAI…EEILKLTTAR (193 aa). Active-site residues include Ser166, His192, and Asp288.

The protein belongs to the CheB family. Post-translationally, phosphorylated by CheA. Phosphorylation of the N-terminal regulatory domain activates the methylesterase activity.

The protein localises to the cytoplasm. The enzyme catalyses [protein]-L-glutamate 5-O-methyl ester + H2O = L-glutamyl-[protein] + methanol + H(+). It carries out the reaction L-glutaminyl-[protein] + H2O = L-glutamyl-[protein] + NH4(+). Its function is as follows. Involved in chemotaxis. Part of a chemotaxis signal transduction system that modulates chemotaxis in response to various stimuli. Catalyzes the demethylation of specific methylglutamate residues introduced into the chemoreceptors (methyl-accepting chemotaxis proteins or MCP) by CheR. Also mediates the irreversible deamidation of specific glutamine residues to glutamic acid. In Agrobacterium fabrum (strain C58 / ATCC 33970) (Agrobacterium tumefaciens (strain C58)), this protein is Protein-glutamate methylesterase/protein-glutamine glutaminase.